We begin with the raw amino-acid sequence, 305 residues long: Delta-9 acyl-lipid desaturase 1 (305 aa).

Residues 1–20 (MSLSASEKEENNKKMAADKA) form a disordered region. 2 helical membrane-spanning segments follow: residues 39 to 59 (IVKA…PFNF) and 60 to 80 (TWPA…GITV). The Fe cation site is built by histidine 83, histidine 88, histidine 120, histidine 123, and histidine 124. Residues 83 to 88 (HRNLAH) carry the Histidine box-1 motif. The Histidine box-2 motif lies at 120 to 124 (HRYHH). The helical transmembrane segment at 180-200 (VLYHILTFGFLLYYFGGLSFL) threads the bilayer. Fe cation-binding residues include histidine 223, histidine 252, histidine 255, and histidine 256. A Histidine box-3 motif is present at residues 252-256 (HNNHH). A helical membrane pass occupies residues 268–288 (WWQIDISWYIVRFLEIIGLAT).

The protein belongs to the fatty acid desaturase type 1 family. Requires Fe cation as cofactor. As to expression, strongly expressed in inflorescence meristems, leaves, and flowers, and weakly in roots and seedpods.

It is found in the endoplasmic reticulum membrane. The protein resides in the plastid. Its subcellular location is the chloroplast membrane. It functions in the pathway lipid metabolism; polyunsaturated fatty acid biosynthesis. Functionally, involved in delta-9 desaturation of fatty acids. Involved in the production of very-long-chain fatty acids (VLCFAs). May desaturate chloroplastic monogalactosyl diacylglycerol (MGDG) and alter chloroplast membrane fluidity, which is required to prime a cold acclimation response. The polypeptide is Delta-9 acyl-lipid desaturase 1 (Arabidopsis thaliana (Mouse-ear cress)).